Reading from the N-terminus, the 132-residue chain is Urease subunit beta (132 aa).

This sequence belongs to the urease beta subunit family. Heterotrimer of UreA (gamma), UreB (beta) and UreC (alpha) subunits. Three heterotrimers associate to form the active enzyme.

Its subcellular location is the cytoplasm. It carries out the reaction urea + 2 H2O + H(+) = hydrogencarbonate + 2 NH4(+). The protein operates within nitrogen metabolism; urea degradation; CO(2) and NH(3) from urea (urease route): step 1/1. The polypeptide is Urease subunit beta (Natronomonas pharaonis (strain ATCC 35678 / DSM 2160 / CIP 103997 / JCM 8858 / NBRC 14720 / NCIMB 2260 / Gabara) (Halobacterium pharaonis)).